A 456-amino-acid chain; its full sequence is GTPase Der (456 aa).

2 consecutive EngA-type G domains span residues 4–169 and 178–353; these read PVVA…PSKD and VQLA…DQSR. Residues 10–17, 57–61, 120–123, 184–191, 231–235, and 296–299 each bind GTP; these read GRPNVGKS, DTGGL, NKCE, DTAGI, and NKWD. A KH-like domain is found at 354–439; that stretch reads RRVTTSVVNE…PIKLFWRGKQ (86 aa).

It belongs to the TRAFAC class TrmE-Era-EngA-EngB-Septin-like GTPase superfamily. EngA (Der) GTPase family. In terms of assembly, associates with the 50S ribosomal subunit.

In terms of biological role, GTPase that plays an essential role in the late steps of ribosome biogenesis. In Prochlorococcus marinus (strain NATL2A), this protein is GTPase Der.